The sequence spans 440 residues: Thymidine phosphorylase (440 aa).

This sequence belongs to the thymidine/pyrimidine-nucleoside phosphorylase family. Homodimer.

It carries out the reaction thymidine + phosphate = 2-deoxy-alpha-D-ribose 1-phosphate + thymine. Its pathway is pyrimidine metabolism; dTMP biosynthesis via salvage pathway; dTMP from thymine: step 1/2. The enzymes which catalyze the reversible phosphorolysis of pyrimidine nucleosides are involved in the degradation of these compounds and in their utilization as carbon and energy sources, or in the rescue of pyrimidine bases for nucleotide synthesis. The chain is Thymidine phosphorylase from Cronobacter sakazakii (strain ATCC BAA-894) (Enterobacter sakazakii).